A 277-amino-acid polypeptide reads, in one-letter code: Large ribosomal subunit protein uL2 (277 aa).

Residues 222 to 265 (GVAMNPIDHPHGGGEGRTSGGRHPVTPWGKPTKGKKTRTNKSTD) are disordered.

The protein belongs to the universal ribosomal protein uL2 family. In terms of assembly, part of the 50S ribosomal subunit. Forms a bridge to the 30S subunit in the 70S ribosome.

In terms of biological role, one of the primary rRNA binding proteins. Required for association of the 30S and 50S subunits to form the 70S ribosome, for tRNA binding and peptide bond formation. It has been suggested to have peptidyltransferase activity; this is somewhat controversial. Makes several contacts with the 16S rRNA in the 70S ribosome. This chain is Large ribosomal subunit protein uL2, found in Bradyrhizobium sp. (strain BTAi1 / ATCC BAA-1182).